Here is a 1464-residue protein sequence, read N- to C-terminus: ABC transporter G family member 35 (1464 aa).

A disordered region spans residues 1-26 (MDAAAEMQKVVSLRRGGGGSSSRGAA). An ABC transporter 1 domain is found at 173–446 (ANALGILPNK…FELMGFKCPE (274 aa)). 206–213 (GPPGSGKT) is an ATP binding site. An ABC transmembrane type-2 1 domain is found at 524 to 737 (ELLKANIDRE…AQNAISVNEF (214 aa)). The next 7 membrane-spanning stretches (helical) occupy residues 542–562 (FVYI…MTVF), 575–595 (GVIF…NGLS), 630–650 (IPMS…VIGF), 662–682 (LLML…GGAA), 686–706 (IVAN…GGFI), 715–735 (WWIW…ISVN), and 774–794 (IGFG…TLAL). The 253-residue stretch at 867-1119 (LTFDNIKYSV…ELIKYFEGIK (253 aa)) folds into the ABC transporter 2 domain. 912–919 (GVSGAGKT) contributes to the ATP binding site. Residues 1192–1406 (NQCLACLWKM…TLYGLVASQF (215 aa)) form the ABC transmembrane type-2 2 domain. Transmembrane regions (helical) follow at residues 1213–1233 (AIRL…FWDL), 1243–1263 (LFNA…LNSQ), 1299–1319 (FPYT…MIGF), 1326–1346 (FFWY…YGMM), 1356–1376 (VASI…GFII), 1387–1407 (WYCW…SQFG), and 1436–1456 (VVAV…GFAI).

It belongs to the ABC transporter superfamily. ABCG family. PDR (TC 3.A.1.205) subfamily.

It localises to the membrane. Its function is as follows. May be a general defense protein. The chain is ABC transporter G family member 35 from Oryza sativa subsp. japonica (Rice).